Reading from the N-terminus, the 217-residue chain is UPF0502 protein VIBHAR_05349 (217 aa).

Belongs to the UPF0502 family.

The chain is UPF0502 protein VIBHAR_05349 from Vibrio campbellii (strain ATCC BAA-1116).